Consider the following 339-residue polypeptide: Ketol-acid reductoisomerase (NADP(+)) (339 aa).

The KARI N-terminal Rossmann domain maps to 1-182; that stretch reads MRVYYDRDAD…GGGRAGIIET (182 aa). Residues 24–27, arginine 48, serine 51, threonine 53, and 83–86 contribute to the NADP(+) site; these read YGSQ and DELQ. Histidine 108 is a catalytic residue. Position 134 (glycine 134) interacts with NADP(+). A KARI C-terminal knotted domain is found at 183–328; sequence TFREECETDL…ARLREMMPWI (146 aa). Residues aspartate 191, glutamate 195, glutamate 227, and glutamate 231 each contribute to the Mg(2+) site. Substrate is bound at residue serine 252.

Belongs to the ketol-acid reductoisomerase family. The cofactor is Mg(2+).

The enzyme catalyses (2R)-2,3-dihydroxy-3-methylbutanoate + NADP(+) = (2S)-2-acetolactate + NADPH + H(+). The catalysed reaction is (2R,3R)-2,3-dihydroxy-3-methylpentanoate + NADP(+) = (S)-2-ethyl-2-hydroxy-3-oxobutanoate + NADPH + H(+). Its pathway is amino-acid biosynthesis; L-isoleucine biosynthesis; L-isoleucine from 2-oxobutanoate: step 2/4. The protein operates within amino-acid biosynthesis; L-valine biosynthesis; L-valine from pyruvate: step 2/4. In terms of biological role, involved in the biosynthesis of branched-chain amino acids (BCAA). Catalyzes an alkyl-migration followed by a ketol-acid reduction of (S)-2-acetolactate (S2AL) to yield (R)-2,3-dihydroxy-isovalerate. In the isomerase reaction, S2AL is rearranged via a Mg-dependent methyl migration to produce 3-hydroxy-3-methyl-2-ketobutyrate (HMKB). In the reductase reaction, this 2-ketoacid undergoes a metal-dependent reduction by NADPH to yield (R)-2,3-dihydroxy-isovalerate. The chain is Ketol-acid reductoisomerase (NADP(+)) from Parvibaculum lavamentivorans (strain DS-1 / DSM 13023 / NCIMB 13966).